The primary structure comprises 646 residues: Ribonuclease Y (646 aa).

The chain crosses the membrane as a helical span at residues Val-4–Ala-24. 2 disordered regions span residues Pro-43 to Glu-62 and Leu-69 to Ser-118. The KH domain maps to Val-336–Asp-402. Residues Val-462–Gly-555 form the HD domain.

It belongs to the RNase Y family.

Its subcellular location is the cell membrane. Its function is as follows. Endoribonuclease that initiates mRNA decay. In Frankia casuarinae (strain DSM 45818 / CECT 9043 / HFP020203 / CcI3), this protein is Ribonuclease Y.